A 224-amino-acid chain; its full sequence is Lipoprotein-releasing system ATP-binding protein LolD (224 aa).

Residues 5 to 224 enclose the ABC transporter domain; that stretch reads LRAENIKKVI…GKVVGEITRV (220 aa). 37–44 lines the ATP pocket; sequence GASGSGKS.

The protein belongs to the ABC transporter superfamily. Lipoprotein translocase (TC 3.A.1.125) family. As to quaternary structure, the complex is composed of two ATP-binding proteins (LolD) and two transmembrane proteins (LolC and LolE).

The protein resides in the cell inner membrane. Functionally, part of the ABC transporter complex LolCDE involved in the translocation of mature outer membrane-directed lipoproteins, from the inner membrane to the periplasmic chaperone, LolA. Responsible for the formation of the LolA-lipoprotein complex in an ATP-dependent manner. This chain is Lipoprotein-releasing system ATP-binding protein LolD, found in Aquifex aeolicus (strain VF5).